We begin with the raw amino-acid sequence, 1513 residues long: Exo-beta-1,6-galactobiohydrolase (1513 aa).

Residues 1–31 (MRVLSKSLAAMVAAATLVGGGAFAVAGTAYA) form the signal peptide. The region spanning 666 to 801 (VADTTSGDSA…PSANQTWTLR (136 aa)) is the Ricin B-type lectin domain. 2 consecutive F5/8 type C domains span residues 965 to 1112 (AIYV…AFVT) and 1116 to 1273 (GAAK…VFAQ). Residues 1456–1480 (VAPGPEEQKPGNTNKPGATGNGNKN) form a disordered region. Positions 1465 to 1480 (PGNTNKPGATGNGNKN) are enriched in polar residues. A helical transmembrane segment spans residues 1489–1509 (VAAIAGAVALLAAAAGALFML).

Belongs to the glycosyl hydrolase 30 family.

It localises to the cell membrane. It catalyses the reaction Hydrolysis of (1-&gt;6)-beta-D-galactosidic linkages in arabinogalactan proteins and (1-&gt;3):(1-&gt;6)-beta-galactans to yield (1-&gt;6)-beta-galactobiose as the final product.. Functionally, involved in the type II arabinogalactan (AG) side chains degradation. Specifically releases the non-reducing terminal beta-1,6-galactobiose (beta-1,6-Gal2) from both dearabinosylated larch AG and polymeric beta-1,6-galactan chains by an exo-mode of action. Shows lower activity with larch AG, and very weak activity with dearabinosylated gum arabic, gum arabic and potato galactan. Can probably release beta-1,6-Gal2 from the internal side chains of type II AG. The chain is Exo-beta-1,6-galactobiohydrolase from Bifidobacterium longum subsp. longum (strain ATCC 15707 / DSM 20219 / JCM 1217 / NCTC 11818 / E194b).